The following is a 238-amino-acid chain: Ribosomal RNA large subunit methyltransferase E (238 aa).

S-adenosyl-L-methionine contacts are provided by Gly-76, Trp-78, Asp-99, Asp-115, and Asp-139. Lys-179 functions as the Proton acceptor in the catalytic mechanism.

This sequence belongs to the class I-like SAM-binding methyltransferase superfamily. RNA methyltransferase RlmE family.

The protein localises to the cytoplasm. It catalyses the reaction uridine(2552) in 23S rRNA + S-adenosyl-L-methionine = 2'-O-methyluridine(2552) in 23S rRNA + S-adenosyl-L-homocysteine + H(+). Functionally, specifically methylates the uridine in position 2552 of 23S rRNA at the 2'-O position of the ribose in the fully assembled 50S ribosomal subunit. The sequence is that of Ribosomal RNA large subunit methyltransferase E from Rhodopseudomonas palustris (strain BisB18).